The primary structure comprises 82 residues: Antitoxin MazE8 (82 aa).

As to quaternary structure, forms a complex with cognate toxin MazF8.

Functionally, antitoxin component of a type II toxin-antitoxin (TA) system. Its cognate toxin is MazF8. In Mycobacterium tuberculosis (strain ATCC 25618 / H37Rv), this protein is Antitoxin MazE8 (mazE8).